The primary structure comprises 146 residues: Catabolic 3-dehydroquinase (146 aa).

Y24 functions as the Proton acceptor in the catalytic mechanism. Positions 78, 84, and 91 each coordinate substrate. H104 functions as the Proton donor in the catalytic mechanism. Substrate-binding positions include 105 to 106 and R115; that span reads IT.

This sequence belongs to the type-II 3-dehydroquinase family. Homododecamer. Adopts a ring-like structure, composed of an arrangement of two hexameric rings stacked on top of one another.

It catalyses the reaction 3-dehydroquinate = 3-dehydroshikimate + H2O. Its pathway is aromatic compound metabolism; 3,4-dihydroxybenzoate biosynthesis; 3,4-dihydroxybenzoate from 3-dehydroquinate: step 1/2. In terms of biological role, is involved in the catabolism of quinate. Allows the utilization of quinate as carbon source via the beta-ketoadipate pathway. The protein is Catabolic 3-dehydroquinase of Candida tropicalis (strain ATCC MYA-3404 / T1) (Yeast).